A 699-amino-acid polypeptide reads, in one-letter code: Polyribonucleotide nucleotidyltransferase (699 aa).

2 residues coordinate Mg(2+): Asp-493 and Asp-499. One can recognise a KH domain in the interval Pro-560–Ile-620. Residues Gly-630–Ala-697 form the S1 motif domain.

Belongs to the polyribonucleotide nucleotidyltransferase family. Mg(2+) serves as cofactor.

Its subcellular location is the cytoplasm. The enzyme catalyses RNA(n+1) + phosphate = RNA(n) + a ribonucleoside 5'-diphosphate. Its function is as follows. Involved in mRNA degradation. Catalyzes the phosphorolysis of single-stranded polyribonucleotides processively in the 3'- to 5'-direction. The protein is Polyribonucleotide nucleotidyltransferase of Thermosipho melanesiensis (strain DSM 12029 / CIP 104789 / BI429).